Reading from the N-terminus, the 375-residue chain is Histidine biosynthesis bifunctional protein HisB (375 aa).

The histidinol-phosphatase stretch occupies residues 1 to 168; sequence MTPILFVDRD…GIAHELADAP (168 aa). The active-site Nucleophile is Asp-8. Mg(2+)-binding residues include Asp-8, Asp-10, and Asp-128. Residue Asp-10 is the Proton donor of the active site. The interval 169 to 375 is imidazoleglycerol-phosphate dehydratase; that stretch reads RRAVVQRNTK…TALPSTKGAL (207 aa).

In the N-terminal section; belongs to the histidinol-phosphatase family. This sequence in the C-terminal section; belongs to the imidazoleglycerol-phosphate dehydratase family. It depends on Mg(2+) as a cofactor.

It is found in the cytoplasm. It catalyses the reaction D-erythro-1-(imidazol-4-yl)glycerol 3-phosphate = 3-(imidazol-4-yl)-2-oxopropyl phosphate + H2O. It carries out the reaction L-histidinol phosphate + H2O = L-histidinol + phosphate. The protein operates within amino-acid biosynthesis; L-histidine biosynthesis; L-histidine from 5-phospho-alpha-D-ribose 1-diphosphate: step 6/9. It participates in amino-acid biosynthesis; L-histidine biosynthesis; L-histidine from 5-phospho-alpha-D-ribose 1-diphosphate: step 8/9. This is Histidine biosynthesis bifunctional protein HisB from Xanthomonas campestris pv. campestris (strain B100).